The sequence spans 918 residues: Bromodomain testis-specific protein (918 aa).

Positions 1–26 are disordered; that stretch reads MSDVKPPQHFTMNGNPPPPEFKNPKK. The region spanning 29 to 135 is the Bromo 1 domain; that stretch reads RLTNHLQYIE…KLFLEKVAEM (107 aa). The Nuclear localization signal motif lies at 204 to 215; sequence NGVKRKADTTTP. Disordered stretches follow at residues 241 to 267, 379 to 430, 575 to 712, 738 to 764, and 862 to 899; these read RGSGRPIKPPCKDLPESPPQHQVGRRT, EPKN…RAHR, KNKP…SLVS, IPPLLSPLTSPSAAMPATGSQSTSSSQ, and DTPKAPEPSSVLQNSVDREREMARKREQERRRREAMSG. Residues 267–376 enclose the Bromo 2 domain; it reads TKLSERLKYC…DVFEFRFSKI (110 aa). Residues 399–416 are compositionally biased toward low complexity; it reads SPSSSESSDSESSSPENS. Residues 426 to 452 adopt a coiled-coil conformation; that stretch reads ERAHRLASLEEQQLKAVREQLQLLTQT. The 83-residue stretch at 496 to 578 folds into the NET domain; sequence DSEEEMNTLP…GCLRKKKNKP (83 aa). Positions 575 to 584 are enriched in basic residues; sequence KNKPPKKSKI. Basic and acidic residues predominate over residues 605–617; it reads KIETDGEIKDTTH. 2 stretches are compositionally biased toward low complexity: residues 622-648 and 739-764; these read SDSSSSSSSSDSSSSDSSSSDSCDSDS and PPLLSPLTSPSAAMPATGSQSTSSSQ. A coiled-coil region spans residues 815 to 902; it reads EKELTTASRG…RREAMSGVID (88 aa). Basic and acidic residues predominate over residues 877-896; sequence VDREREMARKREQERRRREA.

This sequence belongs to the BET family.

The protein localises to the nucleus. In terms of biological role, testis-specific chromatin protein that specifically binds histone H4 acetylated at 'Lys-5' and 'Lys-8' (H4K5ac and H4K8ac, respectively) and plays a key role in spermatogenesis. Required in late pachytene spermatocytes: plays a role in meiotic and post-meiotic cells by binding to acetylated histones at the promoter of specific meiotic and post-meiotic genes, facilitating their activation at the appropriate time. In the post-meiotic phase of spermatogenesis, binds to hyperacetylated histones and participates in their general removal from DNA. Also recognizes and binds a subset of butyrylated histones: able to bind histone H4 butyrylated at 'Lys-8' (H4K8ac), while it is not able to bind H4 butyrylated at 'Lys-5' (H4K5ac). The protein is Bromodomain testis-specific protein (brdt) of Danio rerio (Zebrafish).